The sequence spans 770 residues: MLPGLALLLLAAWTARALEVPTDGNAGLLAEPQIAMFCGRLNMHMNVQNGKWDSDPSGTKTCIDTKEGILQYCQEVYPELQITNVVEANQPVTIQNWCKRGRKQCKTHPHFVIPYRCLVGEFVSDALLVPDKCKFLHQERMDVCETHLHWHTVAKETCSEKSTNLHDYGMLLPCGIDKFRGVEFVCCPLAEESDNVDSADAEEDDSDVWWGGADTDYADGSEDKVVEVAEEEEVAEVEEEEADDDEDDEDGDEVEEEAEEPYEEATERTTSIATTTTTTTESVEEVVREVCSEQAETGPCRAMISRWYFDVTEGKCAPFFYGGCGGNRNNFDTEEYCMAVCGSVMSQSLLKTTQEPLARDPVKLPTTAASTPDAVDKYLETPGDENEHAHFQKAKERLEAKHRERMSQVMREWEEAERQAKNLPKADKKAVIQHFQEKVESLEQEAANERQQLVETHMARVEAMLNDRRRLALENYITALQAVPPRPRHVFNMLKKYVRAEQKDRQHTLKHFEHVRMVDPKKAAQIRSQVMTHLRVIYERMNQSLSLLYNVPAVAEEIQDEVDELLQKEQNYSDDVLANMISEPRISYGNDALMPSLTETKTTVELLPVNGEFSLDDLQPWHSFGADSVPANTENEVEPVDARPAADRGLTTRPGSGLTNIKTEEISEVKMDAEFRHDSGYEVHHQKLVFFAEDVGSNKGAIIGLMVGGVVIATVIVITLVMLKKKQYTSIHHGVVEVDAAVTPEERHLSKMQQNGYENPTYKFFEQMQN.

The N-terminal stretch at 1 to 17 (MLPGLALLLLAAWTARA) is a signal peptide. The Extracellular portion of the chain corresponds to 18-701 (LEVPTDGNAG…AEDVGSNKGA (684 aa)). The GFLD subdomain stretch occupies residues 28-123 (LLAEPQIAMF…PYRCLVGEFV (96 aa)). Residues 28–189 (LLAEPQIAMF…RGVEFVCCPL (162 aa)) form the E1 domain. Cystine bridges form between Cys-38–Cys-62, Cys-73–Cys-117, Cys-98–Cys-105, Cys-133–Cys-187, Cys-144–Cys-174, and Cys-158–Cys-186. Heparin is bound at residue 96 to 110 (NWCKRGRKQCKTHPH). The interval 131–189 (DKCKFLHQERMDVCETHLHWHTVAKETCSEKSTNLHDYGMLLPCGIDKFRGVEFVCCPL) is cuBD subdomain. 3 residues coordinate Cu(2+): His-147, His-151, and Tyr-168. The segment at 181–188 (GVEFVCCP) is zinc-binding. Zn(2+) is bound by residues Glu-183, Cys-186, and Cys-187. The span at 194-207 (DNVDSADAEEDDSD) shows a compositional bias: acidic residues. Residues 194–284 (DNVDSADAEE…TTTTTTESVE (91 aa)) are disordered. Ser-198 carries the post-translational modification Phosphoserine; by CK2. Ser-206 bears the Phosphoserine; by CK1 mark. Sulfotyrosine is present on residues Tyr-217 and Tyr-262. The span at 228–264 (VAEEEEVAEVEEEEADDDEDDEDGDEVEEEAEEPYEE) shows a compositional bias: acidic residues. A compositionally biased stretch (low complexity) spans 268–281 (RTTSIATTTTTTTE). 3 cysteine pairs are disulfide-bonded: Cys-291-Cys-341, Cys-300-Cys-324, and Cys-316-Cys-337. The 51-residue stretch at 291 to 341 (CSEQAETGPCRAMISRWYFDVTEGKCAPFFYGGCGGNRNNFDTEEYCMAVC) folds into the BPTI/Kunitz inhibitor domain. A Sulfotyrosine modification is found at Tyr-336. Residues 344–365 (VMSQSLLKTTQEPLARDPVKLP) carry the OX-2 motif. An E2 domain is found at 374 to 565 (AVDKYLETPG…EEIQDEVDEL (192 aa)). Residues 391–423 (FQKAKERLEAKHRERMSQVMREWEEAERQAKNL) form a heparin-binding region. Ser-441 is subject to Phosphoserine. The heparin-binding stretch occupies residues 491 to 522 (FNMLKKYVRAEQKDRQHTLKHFEHVRMVDPKK). A Phosphotyrosine modification is found at Tyr-497. Residues 523–540 (AAQIRSQVMTHLRVIYER) form a collagen-binding region. N-linked (GlcNAc...) asparagine glycans are attached at residues Asn-542 and Asn-571. Cu(2+) is bound by residues His-677, Tyr-681, His-684, and His-685. The Zn(2+) site is built by His-677, Tyr-681, His-684, and His-685. The segment at 695 to 722 (VGSNKGAIIGLMVGGVVIATVIVITLVM) is interaction with PSEN1. Residues 702–722 (IIGLMVGGVVIATVIVITLVM) traverse the membrane as a helical segment. The Cytoplasmic portion of the chain corresponds to 723–770 (LKKKQYTSIHHGVVEVDAAVTPEERHLSKMQQNGYENPTYKFFEQMQN). The short motif at 724–734 (KKKQYTSIHHG) is the Basolateral sorting signal element. The residue at position 729 (Thr-729) is a Phosphothreonine. Residue Ser-730 is modified to Phosphoserine; by APP-kinase I. The interval 732–751 (HHGVVEVDAAVTPEERHLSK) is interaction with G(o)-alpha. The residue at position 743 (Thr-743) is a Phosphothreonine; by CDK5 and MAPK10. Residues 756–770 (GYENPTYKFFEQMQN) are required for the interaction with KIF5B and for anterograde transport in axons. Residue Tyr-757 is modified to Phosphotyrosine; by ABL1. Residues 757–762 (YENPTY) carry the YENPXY motif; contains endocytosis signal motif. Residue Lys-763 forms a Glycyl lysine isopeptide (Lys-Gly) (interchain with G-Cter in ubiquitin) linkage.

Belongs to the APP family. In terms of assembly, binds, via its C-terminus, to the PID domain of several cytoplasmic proteins, including APBB family members, the APBA family, MAPK8IP1, SHC1 and NUMB and DAB1. Binding to DAB1 inhibits its serine phosphorylation. Interacts (via NPXY motif) with DAB2 (via PID domain); the interaction is impaired by tyrosine phosphorylation of the NPXY motif. Also interacts with GPCR-like protein BPP, APPBP1, IB1, KNS2 (via its TPR domains), APPBP2 (via BaSS) and DDB1. In vitro, it binds MAPT via the MT-binding domains. Associates with microtubules in the presence of ATP and in a kinesin-dependent manner. Interacts, through a C-terminal domain, with GNAO1. Amyloid-beta protein 42 binds CHRNA7 in hippocampal neurons. Amyloid-beta associates with HADH2. Interacts with CPEB1, ANKS1B and AGER. Interacts with ITM2B. Interacts with ITM2C. Interacts with IDE. Can form homodimers; dimerization is enhanced in the presence of Cu(2+) ions. Can form homodimers; this is promoted by heparin binding. Amyloid-beta protein 40 interacts with S100A9. CTF-alpha product of APP interacts with GSAP. Interacts with SORL1 (via N-terminal ectodomain); this interaction retains APP in the trans-Golgi network and reduces processing into soluble APP-alpha and amyloid-beta peptides. The C99 fragment also interacts with SORL1. Interacts with PLD3. Interacts with VDAC1. Interacts with NSG1; could regulate APP processing. Amyloid-beta protein 42 interacts with FPR2. Interacts (via transmembrane region) with PSEN1; the interaction is direct. Interacts with LRRK2. Interacts (via cytoplasmic domain) with KIF5B. Interacts (via C-terminus) with APBB2/FE65L1 (via C-terminus). Interacts (via intracellular domain) with APBB3. Proteolytically processed under normal cellular conditions. Cleavage either by alpha-secretase, beta-secretase or theta-secretase leads to generation and extracellular release of soluble APP peptides, S-APP-alpha and S-APP-beta, and the retention of corresponding membrane-anchored C-terminal fragments, C80, C83 and C99. Subsequent processing of C80 and C83 by gamma-secretase yields P3 peptides. This is the major secretory pathway and is non-amyloidogenic. Alternatively, presenilin/nicastrin-mediated gamma-secretase processing of C99 releases the amyloid-beta proteins, amyloid-beta protein 40 and amyloid-beta protein 42, major components of amyloid plaques, and the cytotoxic C-terminal fragments, gamma-CTF(50), gamma-CTF(57) and gamma-CTF(59). PSEN1 cleavage is more efficient with C83 than with C99 as substrate (in vitro). Amyloid-beta protein 40 and Amyloid-beta protein 42 are cleaved by ACE. Many other minor amyloid-beta peptides, amyloid-beta 1-X peptides, are found in cerebral spinal fluid (CSF) including the amyloid-beta X-15 peptides, produced from the cleavage by alpha-secretase. Post-translationally, proteolytically cleaved by caspases during neuronal apoptosis. Cleavage at Asp-739 by either caspase-3, -8 or -9 results in the production of the neurotoxic C31 peptide and the increased production of amyloid-beta peptides. In terms of processing, N- and O-glycosylated. Phosphorylation in the C-terminal on tyrosine, threonine and serine residues is neuron-specific. Phosphorylation can affect APP processing, neuronal differentiation and interaction with other proteins. Phosphorylated on Thr-743 in neuronal cells by Cdc5 kinase and Mapk10, in dividing cells by Cdc2 kinase in a cell-cycle dependent manner with maximal levels at the G2/M phase and, in vitro, by GSK-3-beta. The Thr-743 phosphorylated form causes a conformational change which reduces binding of Fe65 family members. In dopaminergic (DA) neurons, phosphorylation on Thr-743 by LRKK2 promotes the production and the nuclear translocation of the APP intracellular domain (AICD) which induces DA neuron apoptosis. Phosphorylation on Tyr-757 is required for SHC binding. Phosphorylated in the extracellular domain by casein kinases on both soluble and membrane-bound APP. This phosphorylation is inhibited by heparin. Post-translationally, trophic-factor deprivation triggers the cleavage of surface APP by beta-secretase to release sAPP-beta which is further cleaved to release an N-terminal fragment of APP (N-APP). In terms of processing, amyloid-beta peptides are degraded by IDE. Sulfated on tyrosine residues.

It localises to the cell membrane. It is found in the membrane. Its subcellular location is the perikaryon. The protein resides in the cell projection. The protein localises to the growth cone. It localises to the clathrin-coated pit. It is found in the early endosome. Its subcellular location is the cytoplasmic vesicle. The protein resides in the endoplasmic reticulum. The protein localises to the golgi apparatus. It localises to the secreted. It is found in the cell surface. Its subcellular location is the nucleus. The protein resides in the cytoplasm. Functions as a cell surface receptor and performs physiological functions on the surface of neurons relevant to neurite growth, neuronal adhesion and axonogenesis. Interaction between APP molecules on neighboring cells promotes synaptogenesis. Involved in cell mobility and transcription regulation through protein-protein interactions. Can promote transcription activation through binding to APBB1-KAT5 and inhibit Notch signaling through interaction with Numb. Couples to apoptosis-inducing pathways such as those mediated by G(o) and JIP. Inhibits G(o)-alpha ATPase activity. Acts as a kinesin I membrane receptor, mediating the axonal transport of beta-secretase and presenilin 1. By acting as a kinesin I membrane receptor, plays a role in axonal anterograde transport of cargo towards synapses in axons. May be involved in copper homeostasis/oxidative stress through copper ion reduction. In vitro, copper-metallated APP induces neuronal death directly or is potentiated through Cu(2+)-mediated low-density lipoprotein oxidation. Can regulate neurite outgrowth through binding to components of the extracellular matrix such as heparin and collagen I and IV. Induces a AGER-dependent pathway that involves activation of p38 MAPK, resulting in internalization of amyloid-beta peptide and mitochondrial dysfunction in cultured cortical neurons. Provides Cu(2+) ions for GPC1 which are required for release of nitric oxide (NO) and subsequent degradation of the heparan sulfate chains on GPC1. Its function is as follows. Amyloid-beta peptides are lipophilic metal chelators with metal-reducing activity. Binds transient metals such as copper, zinc and iron. In terms of biological role, the gamma-CTF peptides as well as the caspase-cleaved peptides, including C31, are potent enhancers of neuronal apoptosis. This chain is Amyloid-beta precursor protein, found in Pan troglodytes (Chimpanzee).